Consider the following 615-residue polypeptide: Glutamine--fructose-6-phosphate aminotransferase [isomerizing] (615 aa).

Cys-2 (nucleophile; for GATase activity) is an active-site residue. Positions 2–220 constitute a Glutamine amidotransferase type-2 domain; it reads CGIVGYVGPQ…QDQVVELRRD (219 aa). SIS domains lie at 287–427 and 460–605; these read IPPG…VRGT and LARS…VDQP. The active-site For Fru-6P isomerization activity is Lys-610.

As to quaternary structure, homodimer.

The protein resides in the cytoplasm. It carries out the reaction D-fructose 6-phosphate + L-glutamine = D-glucosamine 6-phosphate + L-glutamate. Its function is as follows. Catalyzes the first step in hexosamine metabolism, converting fructose-6P into glucosamine-6P using glutamine as a nitrogen source. This chain is Glutamine--fructose-6-phosphate aminotransferase [isomerizing], found in Streptomyces coelicolor (strain ATCC BAA-471 / A3(2) / M145).